Consider the following 114-residue polypeptide: Probable non-functional T cell receptor beta variable 6-7 (114 aa).

An N-terminal signal peptide occupies residues 1 to 21; it reads MSLGLLCCVAFSLLWAGPMNA. One can recognise an Ig-like domain in the interval 22-114; sequence GVTQTPKFHV…TSVYFCASSY (93 aa). Residues cysteine 42 and cysteine 110 are joined by a disulfide bond. Asparagine 84 carries an N-linked (GlcNAc...) asparagine glycan.

Alpha-beta TR is a heterodimer composed of an alpha and beta chain; disulfide-linked. The alpha-beta TR is associated with the transmembrane signaling CD3 coreceptor proteins to form the TR-CD3 (TcR or TCR). The assembly of alpha-beta TR heterodimers with CD3 occurs in the endoplasmic reticulum where a single alpha-beta TR heterodimer associates with one CD3D-CD3E heterodimer, one CD3G-CD3E heterodimer and one CD247 homodimer forming a stable octameric structure. CD3D-CD3E and CD3G-CD3E heterodimers preferentially associate with TR alpha and TR beta chains, respectively. The association of the CD247 homodimer is the last step of TcR assembly in the endoplasmic reticulum and is required for transport to the cell surface.

It localises to the cell membrane. Functionally, probable non-functional open reading frame (ORF) of V region of the variable domain of T cell receptor (TR) beta chain. Non-functional ORF generally cannot participate in the synthesis of a productive T cell receptor (TR) chain due to altered V-(D)-J or switch recombination and/or splicing site (at mRNA level) and/or conserved amino acid change (protein level). Alpha-beta T cell receptors are antigen specific receptors which are essential to the immune response and are present on the cell surface of T lymphocytes. Recognize peptide-major histocompatibility (MH) (pMH) complexes that are displayed by antigen presenting cells (APC), a prerequisite for efficient T cell adaptive immunity against pathogens. Binding of alpha-beta TR to pMH complex initiates TR-CD3 clustering on the cell surface and intracellular activation of LCK that phosphorylates the ITAM motifs of CD3G, CD3D, CD3E and CD247 enabling the recruitment of ZAP70. In turn ZAP70 phosphorylates LAT, which recruits numerous signaling molecules to form the LAT signalosome. The LAT signalosome propagates signal branching to three major signaling pathways, the calcium, the mitogen-activated protein kinase (MAPK) kinase and the nuclear factor NF-kappa-B (NF-kB) pathways, leading to the mobilization of transcription factors that are critical for gene expression and essential for T cell growth and differentiation. The T cell repertoire is generated in the thymus, by V-(D)-J rearrangement. This repertoire is then shaped by intrathymic selection events to generate a peripheral T cell pool of self-MH restricted, non-autoaggressive T cells. Post-thymic interaction of alpha-beta TR with the pMH complexes shapes TR structural and functional avidity. This Homo sapiens (Human) protein is Probable non-functional T cell receptor beta variable 6-7.